We begin with the raw amino-acid sequence, 368 residues long: Proteinase-activated receptor 3 (368 aa).

The N-terminal stretch at 1 to 21 (MEMKVLILVGVRLLFLPTTVC) is a signal peptide. Residues 22-37 (QSGMKHVSDNSALTAE) constitute a propeptide, removed for receptor activation. Topologically, residues 38–93 (SFNGNEHSFEEFPLSDIEGWTGATTTIKAKCPEESITTLHVNNATMGYLRSSLSTK) are extracellular. The N-linked (GlcNAc...) asparagine glycan is linked to Asn-80. The helical transmembrane segment at 94–114 (VIPAIYILVFVIGVPANIVTL) threads the bilayer. Residues 115-123 (WKLSSRTKS) are Cytoplasmic-facing. Residues 124-144 (ICLVIFHTNLAIADLLFCVTL) form a helical membrane-spanning segment. At 145 to 166 (PFKIAYHLNGNDWVFGEVMCRV) the chain is on the extracellular side. Cysteines 164 and 243 form a disulfide. Residues 167–187 (TTVAFYGNMYCAILILTCMGI) traverse the membrane as a helical segment. Residues 188 to 208 (NRYLATVHPFTYRKLPKRNFT) lie on the Cytoplasmic side of the membrane. The helical transmembrane segment at 209-229 (LLMCGVVWVMVVLYMLPLAIL) threads the bilayer. The Extracellular portion of the chain corresponds to 230 to 257 (KQEYHLVQPGITTCHDVHDTCESPLPFQ). A helical membrane pass occupies residues 258-278 (FYYFVSLAFFGFLIPFVVSVF). Over 279–300 (CYTTLIHKLNAQDRKWLRYIKA) the chain is Cytoplasmic. A helical membrane pass occupies residues 301–321 (VLLILVIFTICFAPTNIILII). Over 322–338 (HHANYYYSNTDSLYFMY) the chain is Extracellular. A helical membrane pass occupies residues 339–359 (LIALCLGSLNSCLDPFLYFIM). The Cytoplasmic segment spans residues 360-368 (SKIVDQLTS).

The protein belongs to the G-protein coupled receptor 1 family. As to quaternary structure, interacts with INSC/inscuteable and GPSM2. Post-translationally, a proteolytic cleavage generates a new N-terminus that functions as a tethered ligand.

The protein localises to the cell membrane. In terms of biological role, receptor for activated thrombin coupled to G proteins that stimulate phosphoinositide hydrolysis. The sequence is that of Proteinase-activated receptor 3 (F2rl2) from Rattus norvegicus (Rat).